The sequence spans 429 residues: UDP-N-acetylglucosamine 1-carboxyvinyltransferase (429 aa).

Residue 22–23 (KN) coordinates phosphoenolpyruvate. Arg102 provides a ligand contact to UDP-N-acetyl-alpha-D-glucosamine. The active-site Proton donor is Cys126. A 2-(S-cysteinyl)pyruvic acid O-phosphothioketal modification is found at Cys126. UDP-N-acetyl-alpha-D-glucosamine is bound by residues 131-135 (RPVDL), Asp316, and Ile338.

Belongs to the EPSP synthase family. MurA subfamily.

Its subcellular location is the cytoplasm. It catalyses the reaction phosphoenolpyruvate + UDP-N-acetyl-alpha-D-glucosamine = UDP-N-acetyl-3-O-(1-carboxyvinyl)-alpha-D-glucosamine + phosphate. It functions in the pathway cell wall biogenesis; peptidoglycan biosynthesis. In terms of biological role, cell wall formation. Adds enolpyruvyl to UDP-N-acetylglucosamine. The polypeptide is UDP-N-acetylglucosamine 1-carboxyvinyltransferase (Methylobacterium radiotolerans (strain ATCC 27329 / DSM 1819 / JCM 2831 / NBRC 15690 / NCIMB 10815 / 0-1)).